The sequence spans 265 residues: tRNA pseudouridine synthase A (265 aa).

The active-site Nucleophile is aspartate 55. Residue tyrosine 113 coordinates substrate.

This sequence belongs to the tRNA pseudouridine synthase TruA family. Homodimer.

The catalysed reaction is uridine(38/39/40) in tRNA = pseudouridine(38/39/40) in tRNA. In terms of biological role, formation of pseudouridine at positions 38, 39 and 40 in the anticodon stem and loop of transfer RNAs. The protein is tRNA pseudouridine synthase A of Levilactobacillus brevis (strain ATCC 367 / BCRC 12310 / CIP 105137 / JCM 1170 / LMG 11437 / NCIMB 947 / NCTC 947) (Lactobacillus brevis).